The sequence spans 85 residues: UPF0297 protein CPR_1749 (85 aa).

The protein belongs to the UPF0297 family.

This Clostridium perfringens (strain SM101 / Type A) protein is UPF0297 protein CPR_1749.